The sequence spans 344 residues: Small ribosomal subunit protein bS1m (344 aa).

Phosphoserine is present on Ser-327.

This sequence belongs to the bacterial ribosomal protein bS1 family. Component of the mitochondrial small ribosomal subunit (mt-SSU). Mature yeast 74S mitochondrial ribosomes consist of a small (37S) and a large (54S) subunit. The 37S small subunit contains a 15S ribosomal RNA (15S mt-rRNA) and 34 different proteins. The 54S large subunit contains a 21S rRNA (21S mt-rRNA) and 46 different proteins.

It localises to the mitochondrion. Component of the mitochondrial ribosome (mitoribosome), a dedicated translation machinery responsible for the synthesis of mitochondrial genome-encoded proteins, including at least some of the essential transmembrane subunits of the mitochondrial respiratory chain. The mitoribosomes are attached to the mitochondrial inner membrane and translation products are cotranslationally integrated into the membrane. bS1m functionally interacts with the 5'-UTR of mitochondrial mRNAs. This Saccharomyces cerevisiae (strain ATCC 204508 / S288c) (Baker's yeast) protein is Small ribosomal subunit protein bS1m (MRP51).